Here is a 349-residue protein sequence, read N- to C-terminus: Dihydroorotase (349 aa).

H17 and H19 together coordinate Zn(2+). Residues 19-21 (HLR) and N45 contribute to the substrate site. Zn(2+) contacts are provided by K105, H142, and H180. K105 is subject to N6-carboxylysine. H142 lines the substrate pocket. L225 contacts substrate. D253 contacts Zn(2+). The active site involves D253. The substrate site is built by H257 and A269.

The protein belongs to the metallo-dependent hydrolases superfamily. DHOase family. Class II DHOase subfamily. Homodimer. It depends on Zn(2+) as a cofactor.

The catalysed reaction is (S)-dihydroorotate + H2O = N-carbamoyl-L-aspartate + H(+). The protein operates within pyrimidine metabolism; UMP biosynthesis via de novo pathway; (S)-dihydroorotate from bicarbonate: step 3/3. In terms of biological role, catalyzes the reversible cyclization of carbamoyl aspartate to dihydroorotate. In Nitrosomonas europaea (strain ATCC 19718 / CIP 103999 / KCTC 2705 / NBRC 14298), this protein is Dihydroorotase.